Here is a 387-residue protein sequence, read N- to C-terminus: Protein kinase gsk3 (387 aa).

One can recognise a Protein kinase domain in the interval 32–316 (YTSSKVVGSG…AAEAMCHPFF (285 aa)). ATP contacts are provided by residues 38-46 (VGSGSFGVV) and K61. D157 serves as the catalytic Proton acceptor. A Phosphoserine modification is found at S191. Residue Y192 is modified to Phosphotyrosine; by autocatalysis. S335 is modified (phosphoserine).

This sequence belongs to the protein kinase superfamily. CMGC Ser/Thr protein kinase family. GSK-3 subfamily. Post-translationally, autophosphorylated on tyrosine residues.

It localises to the cytoplasm. The protein localises to the nucleus. The enzyme catalyses L-seryl-[protein] + ATP = O-phospho-L-seryl-[protein] + ADP + H(+). The catalysed reaction is L-threonyl-[protein] + ATP = O-phospho-L-threonyl-[protein] + ADP + H(+). Its function is as follows. Interacts with cdc14 which is thought to play a role in the initiation and completion of mitosis. Involved in the positive regulation of mis12. This chain is Protein kinase gsk3 (gsk3), found in Schizosaccharomyces pombe (strain 972 / ATCC 24843) (Fission yeast).